The chain runs to 820 residues: SART-1 family protein DOT2 (820 aa).

3 stretches are compositionally biased toward basic and acidic residues: residues 1–156, 210–219, and 426–445; these read MEVE…DNRG, EEKRNAEKQR, and LGSR…ERIE. 8 disordered regions span residues 1–177, 210–248, 420–445, 523–544, 564–617, 657–678, 729–748, and 762–820; these read MEVE…SALD, EEKR…EHLS, GLGA…ERIE, SSTN…ENTV, KPES…PDEN, KLVG…SKDR, KLKQ…RMRE, and GHVK…RPKP. The residue at position 22 (Ser-22) is a Phosphoserine. Coiled-coil stretches lie at residues 58-120, 171-235, and 433-510; these read RDKE…EKEK, KEAS…NLNQ, and RRQA…KEEA. The span at 525 to 543 shows a compositional bias: low complexity; sequence TNQTTDDNTTTGDETQENT. Basic and acidic residues predominate over residues 582-591; the sequence is VEVKEEHPDG. Residues 596–606 show a composition bias toward acidic residues; that stretch reads NDTDMDAAEDS. Composition is skewed to basic and acidic residues over residues 607–617 and 665–678; these read SDTKEITPDEN and DGGK…SKDR. Composition is skewed to polar residues over residues 733–744 and 767–776; these read MKNSDTPSQSVQ and GQTSDPQSGF. Over residues 792–807 the composition is skewed to basic and acidic residues; it reads GDRKVEHFLGIKRKSE.

This sequence belongs to the SNU66/SART1 family. As to expression, expressed in lateral root cap, columella, meristem and quiescent center (QC). Expressed in young leaves.

Its subcellular location is the nucleus. In terms of biological role, plays a role in root, shoot and flower development. Probably required for normal root and shoot meristem organization and maintenance and the proper expression of PIN and PLT genes. Involved in leaf vasculature patterning. The polypeptide is SART-1 family protein DOT2 (Arabidopsis thaliana (Mouse-ear cress)).